Reading from the N-terminus, the 25-residue chain is Caerin-1.10 (25 aa).

Leu-25 bears the Leucine amide mark.

It belongs to the frog skin active peptide (FSAP) family. Caerin subfamily. Expressed by the skin dorsal glands.

The protein resides in the secreted. Antibacterial peptide with wide spectrum of activity. The protein is Caerin-1.10 of Litoria rothii (Roth's tree frog).